Reading from the N-terminus, the 66-residue chain is Metallothionein (66 aa).

Ser-1 bears the N-acetylserine mark. Cd(2+) is bound by residues Cys-9, Cys-13, Cys-18, Cys-20, Cys-24, Cys-26, Cys-30, Cys-32, Cys-35, Cys-38, Cys-40, Cys-45, Cys-47, Cys-51, Cys-57, Cys-59, Cys-63, and Cys-65.

The protein belongs to the metallothionein superfamily. Type 2 family.

Its function is as follows. The metallothioneins are involved in the cellular sequestration of toxic metal ions and regulation of essential trace elements. This chain is Metallothionein, found in Arianta arbustorum (Land snail).